The chain runs to 455 residues: Bifunctional protein GlmU (455 aa).

The interval 1–227 (MKLKAIILAA…YEEIMAVNSR (227 aa)) is pyrophosphorylase. UDP-N-acetyl-alpha-D-glucosamine-binding positions include 8-11 (LAAG), lysine 22, glutamine 72, and 77-78 (GT). Aspartate 100 contacts Mg(2+). UDP-N-acetyl-alpha-D-glucosamine is bound by residues glycine 137, glutamate 152, asparagine 167, and asparagine 225. Residue asparagine 225 participates in Mg(2+) binding. The linker stretch occupies residues 228–248 (EQLADVEAIMRRRIAKKHMAN). Residues 249–455 (GVTIMNPEHV…WTKRKGLLKK (207 aa)) form an N-acetyltransferase region. Residues arginine 330 and lysine 348 each contribute to the UDP-N-acetyl-alpha-D-glucosamine site. Histidine 360 functions as the Proton acceptor in the catalytic mechanism. Positions 363 and 374 each coordinate UDP-N-acetyl-alpha-D-glucosamine. Acetyl-CoA is bound by residues 383–384 (NY), serine 402, cysteine 420, and arginine 437.

This sequence in the N-terminal section; belongs to the N-acetylglucosamine-1-phosphate uridyltransferase family. The protein in the C-terminal section; belongs to the transferase hexapeptide repeat family. Homotrimer. The cofactor is Mg(2+).

It is found in the cytoplasm. The catalysed reaction is alpha-D-glucosamine 1-phosphate + acetyl-CoA = N-acetyl-alpha-D-glucosamine 1-phosphate + CoA + H(+). It catalyses the reaction N-acetyl-alpha-D-glucosamine 1-phosphate + UTP + H(+) = UDP-N-acetyl-alpha-D-glucosamine + diphosphate. The protein operates within nucleotide-sugar biosynthesis; UDP-N-acetyl-alpha-D-glucosamine biosynthesis; N-acetyl-alpha-D-glucosamine 1-phosphate from alpha-D-glucosamine 6-phosphate (route II): step 2/2. It participates in nucleotide-sugar biosynthesis; UDP-N-acetyl-alpha-D-glucosamine biosynthesis; UDP-N-acetyl-alpha-D-glucosamine from N-acetyl-alpha-D-glucosamine 1-phosphate: step 1/1. It functions in the pathway bacterial outer membrane biogenesis; LPS lipid A biosynthesis. Catalyzes the last two sequential reactions in the de novo biosynthetic pathway for UDP-N-acetylglucosamine (UDP-GlcNAc). The C-terminal domain catalyzes the transfer of acetyl group from acetyl coenzyme A to glucosamine-1-phosphate (GlcN-1-P) to produce N-acetylglucosamine-1-phosphate (GlcNAc-1-P), which is converted into UDP-GlcNAc by the transfer of uridine 5-monophosphate (from uridine 5-triphosphate), a reaction catalyzed by the N-terminal domain. The polypeptide is Bifunctional protein GlmU (Alkaliphilus oremlandii (strain OhILAs) (Clostridium oremlandii (strain OhILAs))).